A 59-amino-acid chain; its full sequence is Large ribosomal subunit protein uL30 (59 aa).

It belongs to the universal ribosomal protein uL30 family. In terms of assembly, part of the 50S ribosomal subunit.

In Actinobacillus pleuropneumoniae serotype 7 (strain AP76), this protein is Large ribosomal subunit protein uL30.